The sequence spans 339 residues: Undifferentiated embryonic cell transcription factor 1 (339 aa).

Disordered regions lie at residues 1–62 (MLLR…QRTP) and 144–270 (MGLL…QVAP). 4 positions are modified to phosphoserine: Ser-15, Ser-18, Ser-48, and Ser-54. Residues 154-170 (RVRRRSTGPGRPQRRGR) are compositionally biased toward basic residues. Low complexity-rich tracts occupy residues 171 to 193 (SSLS…PLAA) and 218 to 229 (TSSPPLTSTDTL). Residues 261 to 270 (GRASSPQVAP) are compositionally biased toward polar residues. The tract at residues 279–310 (QTLTHLGDISTVLGPLRDQLSTLNQHVEHLRG) is leucine-zipper.

Binds to the N-terminal region of ATF2. Associates with the TFIID complex through interaction with TBP. In terms of processing, phosphorylated. In terms of tissue distribution, expressed mainly in pluripotent cells with expression rapidly down-regulated upon cell differentiation.

It localises to the nucleus. Acts as a transcriptional coactivator of ATF2. The sequence is that of Undifferentiated embryonic cell transcription factor 1 from Mus musculus (Mouse).